A 215-amino-acid polypeptide reads, in one-letter code: L-fuculose phosphate aldolase (215 aa).

Residues 28–29 (GN), 43–44 (TG), and 71–72 (SS) contribute to the substrate site. The active-site Proton donor/acceptor is the Glu73. Zn(2+)-binding residues include Glu73, His92, His94, and His155.

Belongs to the aldolase class II family. AraD/FucA subfamily. In terms of assembly, homotetramer. Requires Zn(2+) as cofactor.

It catalyses the reaction L-fuculose 1-phosphate = (S)-lactaldehyde + dihydroxyacetone phosphate. It participates in carbohydrate degradation; L-fucose degradation; L-lactaldehyde and glycerone phosphate from L-fucose: step 3/3. Inhibited by phosphoglycolohydroxamate (PGH). In terms of biological role, involved in the degradation of L-fucose and D-arabinose. Catalyzes the reversible cleavage of L-fuculose 1-phosphate (Fuc1P) to yield dihydroxyacetone phosphate (DHAP) and L-lactaldehyde. Also able to catalyze the reversible cleavage of D-ribulose 1-phosphate, but FucA has a higher affinity for L-fuculose 1-phosphate and L-lactaldehyde than for D-ribulose 1-phosphate and glycolaldehyde, respectively. FucA possesses a high specificity for the dihydroxyacetone phosphate (DHAP), but accepts a great variety of different aldehydes and has a strong preference for L-configurated alpha-hydroxy aldehydes. FucA generates a vicinal diol unit having the absolute (3R,4R)-cis configuration (D-erythro). This Escherichia coli (strain K12) protein is L-fuculose phosphate aldolase.